The primary structure comprises 236 residues: Large ribosomal subunit protein uL3 (236 aa).

The protein belongs to the universal ribosomal protein uL3 family. In terms of assembly, part of the 50S ribosomal subunit. Forms a cluster with proteins L14 and L19.

Its function is as follows. One of the primary rRNA binding proteins, it binds directly near the 3'-end of the 23S rRNA, where it nucleates assembly of the 50S subunit. The protein is Large ribosomal subunit protein uL3 of Anaeromyxobacter dehalogenans (strain 2CP-1 / ATCC BAA-258).